The sequence spans 514 residues: MLIDEAAEASSHISGMKLYLIVLSLLLAVFCVALDNTILSVAIPRITDEFHRLNDIGWYASAYLLTTCAFQLLYGKLYALFSTKWVFLVALCIFEVGSLICGVAPSSVVLIVGRAIAGVGSSGIFTGALVTIAHIVPLAKRPVYMGLLGGMYGIASVAGPLLGGAFTNEVTWRWCFYINLPVGGVTAVVILFLLRIPKSADLRTHGAWEMLKGLDPLGTIVFTPSIICVLLALQWGGVDYAWSNGRIIALFVLFGVLLITFIIIQVLMKDKATVPIKVASQRSVACASVFVFFIGASMFVMIYYVPIWFQAIRNQSPVQAGIDSIALILANTAGAIISGAVTNKTGHYAPWFIVSSVIMSIGAGCLTLFTVDIAQSKWIGFLFLYGIGVGFGFQQGAVAVQAVLPMAQVPIGTALIWFVQMLGGALFTSVAQNIFSTHLAENLANLQLPGLDPEAIVGAGATGFRQLVQPEYMDQVLVAYNAALLDVFQVALICSCLSILGAVGIEWRSVKQNR.

Transmembrane regions (helical) follow at residues 13–33, 61–81, 85–105, 116–136, 146–166, 174–194, 218–238, 247–267, 289–309, and 321–341; these read ISGM…FCVA, SAYL…YALF, WVFL…GVAP, IAGV…AHIV, GLLG…GGAF, WCFY…LFLL, GTIV…WGGV, IIAL…IQVL, VFVF…PIWF, and GIDS…SGAV. Asn343 carries an N-linked (GlcNAc...) asparagine glycan. 4 consecutive transmembrane segments (helical) span residues 351-371, 378-398, 411-431, and 485-505; these read WFIV…LFTV, WIGF…QGAV, IGTA…TSVA, and LDVF…AVGI.

Belongs to the major facilitator superfamily. TCR/Tet family.

The protein resides in the cell membrane. Its function is as follows. Efflux pump; part of the gene cluster that mediates the biosynthesis of aflatoxins. The polypeptide is Efflux pump aflT (Aspergillus parasiticus (strain ATCC 56775 / NRRL 5862 / SRRC 143 / SU-1)).